The following is a 379-amino-acid chain: GTP cyclohydrolase 1 type 2 homolog (379 aa).

Residues His64, His65, Asp103, His333, and Glu337 each contribute to the a divalent metal cation site.

It belongs to the GTP cyclohydrolase I type 2/NIF3 family. As to quaternary structure, homohexamer.

The polypeptide is GTP cyclohydrolase 1 type 2 homolog (Mycobacterium bovis (strain ATCC BAA-935 / AF2122/97)).